We begin with the raw amino-acid sequence, 420 residues long: Glucose-1-phosphate adenylyltransferase (420 aa).

Alpha-D-glucose 1-phosphate is bound by residues Tyr-107, Gly-173, Glu-188–Lys-189, and Ser-206.

The protein belongs to the bacterial/plant glucose-1-phosphate adenylyltransferase family. Homotetramer.

It carries out the reaction alpha-D-glucose 1-phosphate + ATP + H(+) = ADP-alpha-D-glucose + diphosphate. It participates in glycan biosynthesis; glycogen biosynthesis. Its function is as follows. Involved in the biosynthesis of ADP-glucose, a building block required for the elongation reactions to produce glycogen. Catalyzes the reaction between ATP and alpha-D-glucose 1-phosphate (G1P) to produce pyrophosphate and ADP-Glc. The polypeptide is Glucose-1-phosphate adenylyltransferase (Shewanella sp. (strain W3-18-1)).